Consider the following 252-residue polypeptide: 5-oxoprolinase subunit A (252 aa).

This sequence belongs to the LamB/PxpA family. In terms of assembly, forms a complex composed of PxpA, PxpB and PxpC.

The enzyme catalyses 5-oxo-L-proline + ATP + 2 H2O = L-glutamate + ADP + phosphate + H(+). Its function is as follows. Catalyzes the cleavage of 5-oxoproline to form L-glutamate coupled to the hydrolysis of ATP to ADP and inorganic phosphate. The polypeptide is 5-oxoprolinase subunit A (Corynebacterium glutamicum (strain ATCC 13032 / DSM 20300 / JCM 1318 / BCRC 11384 / CCUG 27702 / LMG 3730 / NBRC 12168 / NCIMB 10025 / NRRL B-2784 / 534)).